Reading from the N-terminus, the 60-residue chain is Cecropin-B type 2 (60 aa).

The N-terminal stretch at 1–24 is a signal peptide; that stretch reads MNFSKLFALVLLIGLVLLTGQTEA. Residue isoleucine 58 is modified to Isoleucine amide.

Belongs to the cecropin family.

It is found in the secreted. Its function is as follows. Cecropins have lytic and antibacterial activity against several Gram-positive and Gram-negative bacteria. This chain is Cecropin-B type 2 (CECB2), found in Aedes albopictus (Asian tiger mosquito).